The sequence spans 390 residues: Centrosomal protein of 44 kDa (390 aa).

The tract at residues 11-195 (RNLEQVLRLL…ISEDTLSPIT (185 aa)) is binds with microtubules and centrioles. A coiled-coil region spans residues 233–269 (EITALQTMLAECQENLKKLTSIEKRLDCLEQKMKGKV). A disordered region spans residues 322–348 (RKSEVERPASIPLSSGYSTASSDSTPR). Ser331 and Ser345 each carry phosphoserine. Low complexity predominate over residues 335–345 (SSGYSTASSDS). Thr346 is modified (phosphothreonine). A coiled-coil region spans residues 361–385 (SEETTIQKMERMKKMFEETAELLKC).

In terms of assembly, interacts with CROCC. Interacts with POC1B; the interaction is direct and recruits POC1B to centriolar microtubules. Binds to centriolar microtubules.

The protein resides in the cytoplasm. It localises to the cytoskeleton. Its subcellular location is the microtubule organizing center. The protein localises to the centrosome. It is found in the centriole. The protein resides in the spindle pole. It localises to the midbody. Functionally, centriole-enriched microtubule-binding protein involved in centriole biogenesis. In collaboration with CEP295 and POC1B, is required for the centriole-to-centrosome conversion by ensuring the formation of bona fide centriole wall. Functions as a linker component that maintains centrosome cohesion. Associates with CROCC and regulates its stability and localization to the centrosome. This is Centrosomal protein of 44 kDa (CEP44) from Homo sapiens (Human).